A 211-amino-acid polypeptide reads, in one-letter code: Imidazole glycerol phosphate synthase subunit HisH (211 aa).

One can recognise a Glutamine amidotransferase type-1 domain in the interval 1-206 (MIGIIDYGRG…GKWVNEDATV (206 aa)). Cysteine 79 acts as the Nucleophile in catalysis. Active-site residues include histidine 181 and glutamate 183.

As to quaternary structure, heterodimer of HisH and HisF.

It is found in the cytoplasm. It catalyses the reaction 5-[(5-phospho-1-deoxy-D-ribulos-1-ylimino)methylamino]-1-(5-phospho-beta-D-ribosyl)imidazole-4-carboxamide + L-glutamine = D-erythro-1-(imidazol-4-yl)glycerol 3-phosphate + 5-amino-1-(5-phospho-beta-D-ribosyl)imidazole-4-carboxamide + L-glutamate + H(+). The catalysed reaction is L-glutamine + H2O = L-glutamate + NH4(+). Its pathway is amino-acid biosynthesis; L-histidine biosynthesis; L-histidine from 5-phospho-alpha-D-ribose 1-diphosphate: step 5/9. IGPS catalyzes the conversion of PRFAR and glutamine to IGP, AICAR and glutamate. The HisH subunit catalyzes the hydrolysis of glutamine to glutamate and ammonia as part of the synthesis of IGP and AICAR. The resulting ammonia molecule is channeled to the active site of HisF. This Desulfitobacterium hafniense (strain DSM 10664 / DCB-2) protein is Imidazole glycerol phosphate synthase subunit HisH.